A 129-amino-acid polypeptide reads, in one-letter code: Protein Turandot A2 (129 aa).

The signal sequence occupies residues Met-1 to Gly-21. Residue Asn-49 is glycosylated (N-linked (GlcNAc...) asparagine).

The protein belongs to the Turandot family.

The protein localises to the secreted. In terms of biological role, a humoral factor that plays a role in stress tolerance; gives increased resistance to the lethal effects of bacterial challenge and stress. Regulated by the JAK/STAT pathway and NF-KB-like Relish pathway in the fat body, upd3 in the hemocytes and Mekk1 in response to septic injury and consequent immune response. The protein is Protein Turandot A2 (TotA2) of Drosophila simulans (Fruit fly).